We begin with the raw amino-acid sequence, 353 residues long: Phospho-N-acetylmuramoyl-pentapeptide-transferase (353 aa).

Helical transmembrane passes span 24 to 44 (LGFF…ILWA), 66 to 86 (TPTM…VLCA), 88 to 108 (LGNL…FVGF), 129 to 149 (FGML…KGLD), 160 to 180 (PLFE…FLST), 192 to 212 (GLAS…VYVA), 229 to 249 (VGEL…FLWY), 256 to 276 (VFMG…NAIV), 281 to 301 (ILLV…ILQV), and 330 to 350 (KVIV…LLSL).

Belongs to the glycosyltransferase 4 family. MraY subfamily. Requires Mg(2+) as cofactor.

The protein localises to the cell inner membrane. The enzyme catalyses UDP-N-acetyl-alpha-D-muramoyl-L-alanyl-gamma-D-glutamyl-meso-2,6-diaminopimeloyl-D-alanyl-D-alanine + di-trans,octa-cis-undecaprenyl phosphate = di-trans,octa-cis-undecaprenyl diphospho-N-acetyl-alpha-D-muramoyl-L-alanyl-D-glutamyl-meso-2,6-diaminopimeloyl-D-alanyl-D-alanine + UMP. Its pathway is cell wall biogenesis; peptidoglycan biosynthesis. Its function is as follows. Catalyzes the initial step of the lipid cycle reactions in the biosynthesis of the cell wall peptidoglycan: transfers peptidoglycan precursor phospho-MurNAc-pentapeptide from UDP-MurNAc-pentapeptide onto the lipid carrier undecaprenyl phosphate, yielding undecaprenyl-pyrophosphoryl-MurNAc-pentapeptide, known as lipid I. This chain is Phospho-N-acetylmuramoyl-pentapeptide-transferase, found in Helicobacter pylori (strain ATCC 700392 / 26695) (Campylobacter pylori).